Consider the following 291-residue polypeptide: Ribosomal RNA small subunit methyltransferase A (291 aa).

S-adenosyl-L-methionine contacts are provided by His21, Leu23, Gly48, Glu70, Asp95, and Asn115.

Belongs to the class I-like SAM-binding methyltransferase superfamily. rRNA adenine N(6)-methyltransferase family. RsmA subfamily.

The protein localises to the cytoplasm. It catalyses the reaction adenosine(1518)/adenosine(1519) in 16S rRNA + 4 S-adenosyl-L-methionine = N(6)-dimethyladenosine(1518)/N(6)-dimethyladenosine(1519) in 16S rRNA + 4 S-adenosyl-L-homocysteine + 4 H(+). Specifically dimethylates two adjacent adenosines (A1518 and A1519) in the loop of a conserved hairpin near the 3'-end of 16S rRNA in the 30S particle. May play a critical role in biogenesis of 30S subunits. This Prochlorococcus marinus (strain NATL2A) protein is Ribosomal RNA small subunit methyltransferase A.